The primary structure comprises 465 residues: Trigger factor (465 aa).

The 82-residue stretch at 164–245 (GDFVSIDLSA…VQSVKERELP (82 aa)) folds into the PPIase FKBP-type domain. The segment at 430-465 (GNTVDTAEMFGEPAAEPEQADAAQAGDAEKAAADSE) is disordered. Low complexity predominate over residues 440 to 455 (GEPAAEPEQADAAQAG). Over residues 456 to 465 (DAEKAAADSE) the composition is skewed to basic and acidic residues.

This sequence belongs to the FKBP-type PPIase family. Tig subfamily.

Its subcellular location is the cytoplasm. It catalyses the reaction [protein]-peptidylproline (omega=180) = [protein]-peptidylproline (omega=0). Its function is as follows. Involved in protein export. Acts as a chaperone by maintaining the newly synthesized protein in an open conformation. Functions as a peptidyl-prolyl cis-trans isomerase. In Nocardia farcinica (strain IFM 10152), this protein is Trigger factor.